The sequence spans 456 residues: Transcription factor tau subunit sfc1 (456 aa).

Disordered regions lie at residues 394–416 and 437–456; these read DRYS…GLNT and HEGF…IFGD. Residues 407 to 416 are compositionally biased toward polar residues; the sequence is LNDTVRGLNT. Residues 441 to 456 show a composition bias toward acidic residues; the sequence is EDLEEIDDDYDDIFGD.

In terms of assembly, component of the TFIIIC complex including sfc1, sfc3, sfc4, sfc6 and sfc7. The subunits are organized in two globular domains, tauA and tauB, connected by a proteolysis-sensitive and flexible linker. Interacts with sfc3, sfc4 and sfc6. In terms of processing, phosphorylated.

The protein resides in the nucleus. Functionally, TFIIIC mediates tRNA and 5S RNA gene activation by binding to intragenic promoter elements. Upstream of the transcription start site, TFIIIC assembles the initiation complex TFIIIB-TFIIIC-tDNA, which is sufficient for RNA polymerase III recruitment and function. Part of the tauA domain of TFIIIC that binds boxA DNA promoter sites of tRNA and similar genes. Participates in the interconnection of tauA with tauB via its contacts with sfc3 and sfc6. Serves as a scaffold critical for tauA-DNA spatial configuration and tauB-DNA stability. Localizes to chromatin insulator sequence without recruiting RNA polymerase III and plays a role in nuclear organization. The protein is Transcription factor tau subunit sfc1 (sfc1) of Schizosaccharomyces pombe (strain 972 / ATCC 24843) (Fission yeast).